A 269-amino-acid polypeptide reads, in one-letter code: Bidirectional sugar transporter SWEET1a (269 aa).

Topologically, residues 1 to 6 (MEHIAR) are extracellular. Residues 7 to 27 (FFFGVSGNVIALFLFLSPVVT) traverse the membrane as a helical segment. The 89-residue stretch at 8 to 96 (FFGVSGNVIA…IFLIFAVDRR (89 aa)) folds into the MtN3/slv 1 domain. Topologically, residues 28 to 42 (FWRIIRKRSTEDFSG) are cytoplasmic. A helical membrane pass occupies residues 43 to 63 (VPYNMTLLNCLLSAWYGLPFV). At 64-72 (SPNNILVST) the chain is on the extracellular side. The chain crosses the membrane as a helical span at residues 73–93 (INGTGSVIEAIYVVIFLIFAV). Residues 94–100 (DRRARLR) lie on the Cytoplasmic side of the membrane. A helical transmembrane segment spans residues 101–121 (MLGLLSIVVSIFATVVLVSLL). Residues 122 to 129 (ALHGNARK) are Extracellular-facing. A helical transmembrane segment spans residues 130–150 (VFCGLAATIFSICMYASPLSI). The MtN3/slv 2 domain occupies 132-215 (CGLAATIFSI…ILYFIYRKNK (84 aa)). Residues 151-164 (MRLVIKTKSVEYMP) are Cytoplasmic-facing. The chain crosses the membrane as a helical span at residues 165-185 (FLLSLAVFLCGTSWFIYGLLG). Over 186–189 (RDPF) the chain is Extracellular. A helical membrane pass occupies residues 190–210 (IIIPNGCGSFLGLVQLILYFI). The Cytoplasmic segment spans residues 211–269 (YRKNKGPAVPAGKGEAAAAADVEDAKKVAAAVEMADATTTNKAAADTVVGDGKVVASQV).

This sequence belongs to the SWEET sugar transporter family. As to quaternary structure, forms homooligomers and/or heterooligomers.

The protein localises to the cell membrane. In terms of biological role, mediates both low-affinity uptake and efflux of sugar across the plasma membrane. The protein is Bidirectional sugar transporter SWEET1a of Sorghum bicolor (Sorghum).